We begin with the raw amino-acid sequence, 210 residues long: Putative truncated L-serine dehydratase SDL1 (210 aa).

This sequence belongs to the serine/threonine dehydratase family. It depends on pyridoxal 5'-phosphate as a cofactor.

The protein resides in the cytoplasm. It catalyses the reaction L-serine = pyruvate + NH4(+). The protein operates within carbohydrate biosynthesis; gluconeogenesis. The chain is Putative truncated L-serine dehydratase SDL1 (SDL1) from Saccharomyces cerevisiae (strain ATCC 204508 / S288c) (Baker's yeast).